Here is a 406-residue protein sequence, read N- to C-terminus: MRRVVITGIGIVSSIGNNKKEVLASLYKGVSGIVSSEEMKKLGMRSAVWGNIKLESINIITQKLSRFMNNASRYSFVAMMEAIKDAKIDREYYQKNPRVGLISGSGCSFSKNTLTSDIHLMKNKHISKGISPYLAVKTMPSGISACLSTLFKIYGVTYSISSACATSAHCIGNAFELIQFGRQDLIFAGGGEEISLELAMQFDAMRALSTCFNNDPKKASRVYDVYRDGFVISGGAGMLVIEELNSALSRSAYIYAEIIGYAATSDGSNIVVPSGDGAIRCMNLARKGKNIPIDYLNVHGTGTKIGDLIELEAIRKVFLNEKKPMISATKSMTGHGLGASGVHEMIYTLLMLKYNFIAPTINIENLEPCAENMNIIQKTTNIEINTAMSNSFGFGGTNVSLIVKKY.

Residues 1 to 405 form the Ketosynthase family 3 (KS3) domain; the sequence is MRRVVITGIG…GTNVSLIVKK (405 aa). Catalysis depends on for beta-ketoacyl synthase activity residues Cys-164, His-299, and His-335.

Belongs to the thiolase-like superfamily. Beta-ketoacyl-ACP synthases family. In terms of assembly, homodimer.

Its subcellular location is the cytoplasm. It catalyses the reaction a fatty acyl-[ACP] + malonyl-[ACP] + H(+) = a 3-oxoacyl-[ACP] + holo-[ACP] + CO2. The enzyme catalyses (3Z)-decenoyl-[ACP] + malonyl-[ACP] + H(+) = 3-oxo-(5Z)-dodecenoyl-[ACP] + holo-[ACP] + CO2. It participates in lipid metabolism; fatty acid biosynthesis. Involved in the type II fatty acid elongation cycle. Catalyzes the elongation of a wide range of acyl-ACP by the addition of two carbons from malonyl-ACP to an acyl acceptor. Can also use unsaturated fatty acids. Catalyzes a key reaction in unsaturated fatty acid (UFA) synthesis, the elongation of the cis-3-decenoyl-ACP produced by FabA. The protein is 3-oxoacyl-[acyl-carrier-protein] synthase 1 (fabB) of Buchnera aphidicola subsp. Acyrthosiphon pisum (strain APS) (Acyrthosiphon pisum symbiotic bacterium).